The sequence spans 501 residues: Cytochrome P450 71D6 (501 aa).

Cys-442 lines the heme pocket.

It belongs to the cytochrome P450 family. It depends on heme as a cofactor.

This is Cytochrome P450 71D6 (CYP71D6) from Solanum chacoense (Chaco potato).